The sequence spans 578 residues: NADH-quinone oxidoreductase subunit C/D (578 aa).

An NADH dehydrogenase I subunit C region spans residues 1–167; that stretch reads MILSLFKLFG…DEFYFTKQKE (167 aa). Residues 192–578 are NADH dehydrogenase I subunit D; sequence EYMFLNFGPN…IDFVMSDVDR (387 aa).

This sequence in the N-terminal section; belongs to the complex I 30 kDa subunit family. In the C-terminal section; belongs to the complex I 49 kDa subunit family. As to quaternary structure, NDH-1 is composed of 13 different subunits. Subunits NuoB, CD, E, F, and G constitute the peripheral sector of the complex.

It is found in the cell inner membrane. The catalysed reaction is a quinone + NADH + 5 H(+)(in) = a quinol + NAD(+) + 4 H(+)(out). Functionally, NDH-1 shuttles electrons from NADH, via FMN and iron-sulfur (Fe-S) centers, to quinones in the respiratory chain. The immediate electron acceptor for the enzyme in this species is believed to be ubiquinone. Couples the redox reaction to proton translocation (for every two electrons transferred, four hydrogen ions are translocated across the cytoplasmic membrane), and thus conserves the redox energy in a proton gradient. This chain is NADH-quinone oxidoreductase subunit C/D, found in Buchnera aphidicola subsp. Cinara cedri (strain Cc).